We begin with the raw amino-acid sequence, 1030 residues long: E3 ubiquitin-protein ligase mib1 (1030 aa).

Residues 6-74 form the MIB/HERC2 1 domain; it reads NNRVMMEGVG…AYDVRILDSA (69 aa). Residues 80–132 form a ZZ-type zinc finger; it reads HDGTMCDTCRQQPIIGIRWKCAECTNYDLCTTCYHGDKHHLRHRFYRITTPGS. Residues Cys85, Cys88, Cys100, Cys103, Cys109, Cys112, His118, and His122 each coordinate Zn(2+). One can recognise an MIB/HERC2 2 domain in the interval 143–221; that stretch reads SKKITARGIF…MSDLKCVQDA (79 aa). 9 ANK repeats span residues 430–460, 463–492, 496–525, 529–558, 562–591, 595–627, 631–661, 665–694, and 698–727; these read DINE…DVNG, AGHT…DLEA, DGDR…DLNA, RRQT…HPSL, EGDT…DVTI, NGFN…IVDE, DGYT…NLDV, NQQT…KLDV, and DGDT…VSKV. RING-type zinc fingers lie at residues 817–852 and 864–899; these read CMVC…LICK and CVVC…VQCR. A coiled-coil region spans residues 957 to 986; sequence ALQRDKDNTNVNADVQKLQQQLQDIKEQTM. The segment at 987 to 1020 adopts an RING-type 3 zinc-finger fold; that stretch reads CPVCLDRLKNMIFMCGHGTCQLCGDRMSECPICR.

In terms of assembly, interacts with deltaA (dla) and deltaD (dld).

Its subcellular location is the cytoplasm. The protein resides in the cytoskeleton. It localises to the microtubule organizing center. The protein localises to the centrosome. It is found in the centriolar satellite. Its subcellular location is the cell membrane. It carries out the reaction S-ubiquitinyl-[E2 ubiquitin-conjugating enzyme]-L-cysteine + [acceptor protein]-L-lysine = [E2 ubiquitin-conjugating enzyme]-L-cysteine + N(6)-ubiquitinyl-[acceptor protein]-L-lysine.. The protein operates within protein modification; protein ubiquitination. Functionally, E3 ubiquitin-protein ligase that mediates ubiquitination of Delta receptors, which act as ligands of Notch proteins. Positively regulates the Delta-mediated Notch signaling by ubiquitinating the intracellular domain of Delta, leading to endocytosis of Delta receptors. It thereby participates in many processes regulated by the Notch signaling pathway, such as midline cell fate specification prior to germ layer formation, patterning of sensory cell differentiation in the ear, neurogenesis of the hindbrain and commitment to a secretory fate in the intestine. Essential for early embryonic development. The protein is E3 ubiquitin-protein ligase mib1 (mib1) of Danio rerio (Zebrafish).